A 175-amino-acid polypeptide reads, in one-letter code: uncharacterized protein (175 aa).

The stretch at 107 to 138 forms a coiled coil; that stretch reads KTEEEAEKTLQEIERKIFKKLWENLDKERKRE.

This is an uncharacterized protein from Aquifex aeolicus (strain VF5).